Reading from the N-terminus, the 362-residue chain is Protein-arginine kinase (362 aa).

In terms of domain architecture, Phosphagen kinase C-terminal spans 24 to 255; sequence IVLSSRIRLA…QQLIAQERMA (232 aa). Residues 27 to 31, histidine 92, arginine 126, 177 to 181, and 208 to 213 each bind ATP; these read SSRIR, RASVM, and RGTYGE. An RDXXRA motif of the pArg binding pocket involved in allosteric regulation motif is present at residues 338–343; it reads RDVRRA.

It belongs to the ATP:guanido phosphotransferase family.

It carries out the reaction L-arginyl-[protein] + ATP = N(omega)-phospho-L-arginyl-[protein] + ADP + H(+). With respect to regulation, appears to be allosterically activated by the binding of pArg-containing polypeptides to the pArg-binding pocket localized in the C-terminal domain of McsB. Its function is as follows. Catalyzes the specific phosphorylation of arginine residues in a large number of proteins. Is part of the bacterial stress response system. Protein arginine phosphorylation has a physiologically important role and is involved in the regulation of many critical cellular processes, such as protein homeostasis, motility, competence, and stringent and stress responses, by regulating gene expression and protein activity. In Geobacillus sp. (strain WCH70), this protein is Protein-arginine kinase.